The chain runs to 126 residues: Phosphoribosyl-AMP cyclohydrolase (126 aa).

Asp-76 provides a ligand contact to Mg(2+). Cys-77 contributes to the Zn(2+) binding site. Mg(2+)-binding residues include Asp-78 and Asp-80. The Zn(2+) site is built by Cys-94 and Cys-101.

This sequence belongs to the PRA-CH family. Homodimer. Requires Mg(2+) as cofactor. The cofactor is Zn(2+).

The protein localises to the cytoplasm. It carries out the reaction 1-(5-phospho-beta-D-ribosyl)-5'-AMP + H2O = 1-(5-phospho-beta-D-ribosyl)-5-[(5-phospho-beta-D-ribosylamino)methylideneamino]imidazole-4-carboxamide. The protein operates within amino-acid biosynthesis; L-histidine biosynthesis; L-histidine from 5-phospho-alpha-D-ribose 1-diphosphate: step 3/9. Catalyzes the hydrolysis of the adenine ring of phosphoribosyl-AMP. The sequence is that of Phosphoribosyl-AMP cyclohydrolase from Ruthia magnifica subsp. Calyptogena magnifica.